The chain runs to 143 residues: Mannitol-specific phosphotransferase enzyme IIA component (143 aa).

In terms of domain architecture, PTS EIIA type-2 spans 2–142; that stretch reads QVLAKENIKL…EDLIAIFNEV (141 aa). The active-site Tele-phosphohistidine intermediate is the His62. A Phosphohistidine; by HPr modification is found at His62. Residue Ser74 is modified to Phosphoserine.

It localises to the cytoplasm. In terms of biological role, the phosphoenolpyruvate-dependent sugar phosphotransferase system (sugar PTS), a major carbohydrate active transport system, catalyzes the phosphorylation of incoming sugar substrates concomitantly with their translocation across the cell membrane. The enzyme II CmtAB PTS system is involved in D-mannitol transport. The protein is Mannitol-specific phosphotransferase enzyme IIA component (mtlF) of Bacillus subtilis (strain 168).